Reading from the N-terminus, the 434-residue chain is GTPase Obg (434 aa).

The Obg domain occupies 4 to 162; the sequence is ADFIDRIVIY…RKLVLELKLL (159 aa). Positions 163–333 constitute an OBG-type G domain; sequence ADVGLVGYPN…IVYKLAEIVK (171 aa). GTP is bound by residues 169-176, 194-198, 215-218, 285-288, and 314-316; these read GYPNVGKS, FTTTI, DIPG, NKID, and SII. The Mg(2+) site is built by serine 176 and threonine 196. An OCT domain is found at 355-434; it reads LWKELPERFN…VAQRAFEYKE (80 aa).

It belongs to the TRAFAC class OBG-HflX-like GTPase superfamily. OBG GTPase family. As to quaternary structure, monomer. The cofactor is Mg(2+).

The protein localises to the cytoplasm. An essential GTPase which binds GTP, GDP and possibly (p)ppGpp with moderate affinity, with high nucleotide exchange rates and a fairly low GTP hydrolysis rate. Plays a role in control of the cell cycle, stress response, ribosome biogenesis and in those bacteria that undergo differentiation, in morphogenesis control. The protein is GTPase Obg of Thermosipho africanus (strain TCF52B).